Here is a 104-residue protein sequence, read N- to C-terminus: Large ribosomal subunit protein uL24 (104 aa).

Residues 41 to 61 (ISKKHKKPTPNEKQSGGIFEK) are disordered.

Belongs to the universal ribosomal protein uL24 family. As to quaternary structure, part of the 50S ribosomal subunit.

Its function is as follows. One of two assembly initiator proteins, it binds directly to the 5'-end of the 23S rRNA, where it nucleates assembly of the 50S subunit. In terms of biological role, one of the proteins that surrounds the polypeptide exit tunnel on the outside of the subunit. The protein is Large ribosomal subunit protein uL24 of Wigglesworthia glossinidia brevipalpis.